A 178-amino-acid chain; its full sequence is Endoribonuclease YbeY (178 aa).

Residues histidine 118, histidine 122, and histidine 128 each contribute to the Zn(2+) site. Residues 158–178 (ADRQSEKDRRLLDKSRYFDEP) form a disordered region.

The protein belongs to the endoribonuclease YbeY family. Zn(2+) serves as cofactor.

The protein localises to the cytoplasm. Single strand-specific metallo-endoribonuclease involved in late-stage 70S ribosome quality control and in maturation of the 3' terminus of the 16S rRNA. The chain is Endoribonuclease YbeY from Mycolicibacterium smegmatis (strain ATCC 700084 / mc(2)155) (Mycobacterium smegmatis).